Reading from the N-terminus, the 57-residue chain is uncharacterized protein (57 aa).

A signal peptide spans methionine 1–asparagine 22. A coiled-coil region spans residues asparagine 26–glutamine 57.

This is an uncharacterized protein from Acheta domesticus (House cricket).